The primary structure comprises 438 residues: Cytochrome P450 monooxygenase claJ (438 aa).

Cys378 contacts heme.

This sequence belongs to the cytochrome P450 family. It depends on heme as a cofactor.

The protein operates within secondary metabolite biosynthesis. Its function is as follows. Cytochrome P450 monooxygenase; part of the cla gene cluster that produces clavatol and ortho-quinone methide. The clavatol biosynthesis cluster cla and the terrestric acid cluster tra are both involved in the production of peniphenones and penilactones. The non-reducing PKS claF is responsible for the formation of clavatol from successive condensations of 3 malonyl-CoA units, presumably with a simple acetyl-CoA starter unit, and 2 methylation steps. The esterase claE probably collaborates with claF by catalyzing the hydrolysis of ACP-bound acyl intermediates to free the ACP from stalled intermediates. The clavatol oxidase claD then converts clavatol to hydroxyclavatol. Spontaneous dehydration of hydroxyclavatol leads to the accumulation of the highly active ortho-quinone methide. On the other hand, the PKS-NRPS hybrid traA is involved in the formation of crustosic acid, with the help of traB and traD. The polyketide synthase module (PKS) of traA is responsible for the synthesis of the polyketide backbone via the condensation of an acetyl-CoA starter unit with 3 malonyl-CoA units. The downstream nonribosomal peptide synthetase (NRPS) module then amidates the carboxyl end of the polyketide with L-malic acid. Because traA lacks a designated enoylreductase (ER) domain, the required activity is provided the enoyl reductase traG. Crustosic acid undergoes decarboxylation and isomerization to the terrestric acid, catalyzed by the 2-oxoglutarate-dependent dioxygenase traH. Both acids are further converted to the 2 gamma-butyrolactones (R)-5-methyltetronic acid and (S)-5-carboxylmethyltetronic acid, with involvement of the cytochrome P450 monooxygenase claJ. Spontaneous addition of the methide to these gamma-butyrolactones leads to peniphenone D and penilactone D, which undergo again stereospecific attacking by methide to give penilactones A and B. The chain is Cytochrome P450 monooxygenase claJ from Penicillium crustosum (Blue mold fungus).